The primary structure comprises 157 residues: Protein Smg (157 aa).

Belongs to the Smg family.

The protein is Protein Smg of Shigella boydii serotype 18 (strain CDC 3083-94 / BS512).